A 547-amino-acid chain; its full sequence is CTP synthase (547 aa).

The tract at residues 1–267 is amidoligase domain; that stretch reads MTKFVFVTGG…AQQTLALLNL (267 aa). Ser13 provides a ligand contact to CTP. A UTP-binding site is contributed by Ser13. Residues 14-19 and Asp71 each bind ATP; that span reads SIGKGI. 2 residues coordinate Mg(2+): Asp71 and Glu141. Residues 148–150, 188–193, and Lys224 contribute to the CTP site; these read DIE and KTKPTQ. Residues 188–193 and Lys224 contribute to the UTP site; that span reads KTKPTQ. The Glutamine amidotransferase type-1 domain occupies 292–534; that stretch reads EIALVGKYVQ…VKAAVDHYST (243 aa). Gly354 contributes to the L-glutamine binding site. Residue Cys381 is the Nucleophile; for glutamine hydrolysis of the active site. L-glutamine-binding positions include 382-385, Glu405, and Arg462; that span reads LGMQ. Residues His507 and Glu509 contribute to the active site.

It belongs to the CTP synthase family. Homotetramer.

The enzyme catalyses UTP + L-glutamine + ATP + H2O = CTP + L-glutamate + ADP + phosphate + 2 H(+). It catalyses the reaction L-glutamine + H2O = L-glutamate + NH4(+). The catalysed reaction is UTP + NH4(+) + ATP = CTP + ADP + phosphate + 2 H(+). The protein operates within pyrimidine metabolism; CTP biosynthesis via de novo pathway; CTP from UDP: step 2/2. With respect to regulation, allosterically activated by GTP, when glutamine is the substrate; GTP has no effect on the reaction when ammonia is the substrate. The allosteric effector GTP functions by stabilizing the protein conformation that binds the tetrahedral intermediate(s) formed during glutamine hydrolysis. Inhibited by the product CTP, via allosteric rather than competitive inhibition. Its function is as follows. Catalyzes the ATP-dependent amination of UTP to CTP with either L-glutamine or ammonia as the source of nitrogen. Regulates intracellular CTP levels through interactions with the four ribonucleotide triphosphates. The polypeptide is CTP synthase (Rippkaea orientalis (strain PCC 8801 / RF-1) (Cyanothece sp. (strain PCC 8801))).